The following is a 265-amino-acid chain: Membrane steroid-binding protein 2 (265 aa).

Residues 63 to 85 form a helical membrane-spanning segment; sequence WAAARSASPVAVIAAVAGAAVVY. A disordered region spans residues 94 to 116; the sequence is PPPPPARPREEPSEEAPPPPEPV. Residues 118-217 form the Cytochrome b5 heme-binding domain; it reads VGEITAEELL…SKYVKVGTIK (100 aa). The interval 120-217 is steroid-binding; sequence EITAEELLQY…SKYVKVGTIK (98 aa).

This sequence belongs to the cytochrome b5 family. MAPR subfamily.

Its subcellular location is the cell membrane. In terms of biological role, binds multiple steroid compounds. The chain is Membrane steroid-binding protein 2 from Oryza sativa subsp. japonica (Rice).